A 368-amino-acid chain; its full sequence is Germination protease (368 aa).

The propeptide occupies Met1 to Asp16.

Belongs to the peptidase A25 family. In terms of assembly, homotetramer. Autoproteolytically processed. The inactive tetrameric zymogen termed p46 autoprocesses to a smaller form termed p41, which is active only during spore germination.

It carries out the reaction Endopeptidase action with P4 Glu or Asp, P1 preferably Glu &gt; Asp, P1' hydrophobic and P2' Ala.. In terms of biological role, initiates the rapid degradation of small, acid-soluble proteins during spore germination. In Bacillus velezensis (strain DSM 23117 / BGSC 10A6 / LMG 26770 / FZB42) (Bacillus amyloliquefaciens subsp. plantarum), this protein is Germination protease.